The following is a 221-amino-acid chain: HTH-type transcriptional regulator McbR (221 aa).

The HTH gntR-type domain occupies 10–77 (VSLTLQVEND…PAQAFTVPEV (68 aa)). The segment at residues 37–56 (TKNLAEQLGMSITPVREALL) is a DNA-binding region (H-T-H motif).

Functionally, important for biofilm formation. Represses expression of McbA by binding to its promoter region, which prevents colanic acid overproduction and mucoidy. The polypeptide is HTH-type transcriptional regulator McbR (mcbR) (Escherichia coli (strain K12)).